Consider the following 543-residue polypeptide: Putative fatty acyl-CoA reductase CG8303 (543 aa).

The disordered stretch occupies residues 1–29 (MAVITEHGGTTSSPPENNNSIGNGKHRVN). Positions 8–22 (GGTTSSPPENNNSIG) are enriched in polar residues. The next 3 helical transmembrane spans lie at 386-406 (LFFYLFHLLPAMVFIIPEKLF), 500-520 (VFNVLYYAGYVVIFAVLYFAL), and 522-542 (LTLGLQIGLTLAVLIWGFLVW).

The protein belongs to the fatty acyl-CoA reductase family.

The protein localises to the membrane. The catalysed reaction is a long-chain fatty acyl-CoA + 2 NADPH + 2 H(+) = a long-chain primary fatty alcohol + 2 NADP(+) + CoA. It catalyses the reaction hexadecanoyl-CoA + 2 NADPH + 2 H(+) = hexadecan-1-ol + 2 NADP(+) + CoA. It carries out the reaction octadecanoyl-CoA + 2 NADPH + 2 H(+) = octadecan-1-ol + 2 NADP(+) + CoA. In terms of biological role, catalyzes the reduction of C16 or C18 fatty acyl-CoA to fatty alcohols. The polypeptide is Putative fatty acyl-CoA reductase CG8303 (Drosophila melanogaster (Fruit fly)).